Reading from the N-terminus, the 598-residue chain is UvrABC system protein C (598 aa).

The GIY-YIG domain occupies 11–91; that stretch reads QKPGVYIMHN…IKKYRPHYNI (81 aa). The UVR domain maps to 195–230; that stretch reads KTTIKKLKKDMNRYAKNMEFEKAAMLRDQIDTIKIT.

This sequence belongs to the UvrC family. Interacts with UvrB in an incision complex.

The protein localises to the cytoplasm. Its function is as follows. The UvrABC repair system catalyzes the recognition and processing of DNA lesions. UvrC both incises the 5' and 3' sides of the lesion. The N-terminal half is responsible for the 3' incision and the C-terminal half is responsible for the 5' incision. In Methanosphaera stadtmanae (strain ATCC 43021 / DSM 3091 / JCM 11832 / MCB-3), this protein is UvrABC system protein C.